The sequence spans 348 residues: GTPase Obg (348 aa).

An Obg domain is found at 1 to 159 (MKFLDQAKIY…KTIILRLKLI (159 aa)). Residues 160-327 (ADAGLVGLPN…VLRLAADEIW (168 aa)) form the OBG-type G domain. Residues 166–173 (GLPNAGKS), 191–195 (FTTLT), 212–215 (DIPG), 279–282 (NKMD), and 308–310 (SGV) contribute to the GTP site. The Mg(2+) site is built by serine 173 and threonine 193.

Belongs to the TRAFAC class OBG-HflX-like GTPase superfamily. OBG GTPase family. As to quaternary structure, monomer. The cofactor is Mg(2+).

The protein resides in the cytoplasm. An essential GTPase which binds GTP, GDP and possibly (p)ppGpp with moderate affinity, with high nucleotide exchange rates and a fairly low GTP hydrolysis rate. Plays a role in control of the cell cycle, stress response, ribosome biogenesis and in those bacteria that undergo differentiation, in morphogenesis control. The protein is GTPase Obg of Parvibaculum lavamentivorans (strain DS-1 / DSM 13023 / NCIMB 13966).